Reading from the N-terminus, the 491-residue chain is Transmembrane protein 200A (491 aa).

Residues Met-1–Ser-61 lie on the Cytoplasmic side of the membrane. Residues Arg-16–Arg-41 are disordered. A compositionally biased stretch (polar residues) spans Ala-20–Thr-34. Residues Gly-62–Gly-82 form a helical membrane-spanning segment. Residues Tyr-83–Lys-126 lie on the Extracellular side of the membrane. N-linked (GlcNAc...) asparagine glycosylation is present at Asn-100. A helical transmembrane segment spans residues Met-127–Leu-147. The Cytoplasmic portion of the chain corresponds to His-148–Phe-491. A Phosphoserine modification is found at Ser-350.

This sequence belongs to the TMEM200 family. In terms of tissue distribution, expressed in cerebellum.

The protein localises to the membrane. The chain is Transmembrane protein 200A (TMEM200A) from Homo sapiens (Human).